We begin with the raw amino-acid sequence, 146 residues long: Hemoglobin subunit beta (146 aa).

At Val-1 the chain carries N-acetylvaline. The region spanning 2–146 (HLTAEEKAAV…VANALAHKYH (145 aa)) is the Globin domain. Residue Thr-12 is modified to Phosphothreonine. Ser-44 bears the Phosphoserine mark. Lys-59 is modified (N6-acetyllysine). His-63 lines the heme b pocket. N6-acetyllysine is present on Lys-82. His-92 is a binding site for heme b. Cys-93 carries the S-nitrosocysteine modification. Position 144 is an N6-acetyllysine (Lys-144).

The protein belongs to the globin family. Heterotetramer of two alpha chains and two beta chains. In terms of tissue distribution, red blood cells.

Functionally, involved in oxygen transport from the lung to the various peripheral tissues. This Mellivora capensis (Ratel) protein is Hemoglobin subunit beta (HBB).